A 253-amino-acid polypeptide reads, in one-letter code: Adenosylcobinamide-GDP ribazoletransferase (253 aa).

The next 4 membrane-spanning stretches (helical) occupy residues 33–53 (ISPLIIGISLALIESAVYVLL), 106–126 (IGSGGIGLLLVYLSIQIVALL), 132–152 (FYTIFHLISSNVLSMTIGLYI), and 178–198 (VLLLELIPFISLYNIIVFLVF).

This sequence belongs to the CobS family. The cofactor is Mg(2+).

Its subcellular location is the cell membrane. The catalysed reaction is alpha-ribazole + adenosylcob(III)inamide-GDP = adenosylcob(III)alamin + GMP + H(+). It carries out the reaction alpha-ribazole 5'-phosphate + adenosylcob(III)inamide-GDP = adenosylcob(III)alamin 5'-phosphate + GMP + H(+). It functions in the pathway cofactor biosynthesis; adenosylcobalamin biosynthesis; adenosylcobalamin from cob(II)yrinate a,c-diamide: step 7/7. In terms of biological role, joins adenosylcobinamide-GDP and alpha-ribazole to generate adenosylcobalamin (Ado-cobalamin). Also synthesizes adenosylcobalamin 5'-phosphate from adenosylcobinamide-GDP and alpha-ribazole 5'-phosphate. The chain is Adenosylcobinamide-GDP ribazoletransferase from Saccharolobus islandicus (strain Y.G.57.14 / Yellowstone #1) (Sulfolobus islandicus).